Consider the following 162-residue polypeptide: NADH-quinone oxidoreductase subunit I (162 aa).

4Fe-4S ferredoxin-type domains lie at 53–83 (LRRY…IDSA) and 93–122 (TRYD…ETHI). Cys63, Cys66, Cys69, Cys73, Cys102, Cys105, Cys108, and Cys112 together coordinate [4Fe-4S] cluster.

The protein belongs to the complex I 23 kDa subunit family. As to quaternary structure, NDH-1 is composed of 14 different subunits. Subunits NuoA, H, J, K, L, M, N constitute the membrane sector of the complex. Requires [4Fe-4S] cluster as cofactor.

The protein resides in the cell inner membrane. The enzyme catalyses a quinone + NADH + 5 H(+)(in) = a quinol + NAD(+) + 4 H(+)(out). NDH-1 shuttles electrons from NADH, via FMN and iron-sulfur (Fe-S) centers, to quinones in the respiratory chain. The immediate electron acceptor for the enzyme in this species is believed to be ubiquinone. Couples the redox reaction to proton translocation (for every two electrons transferred, four hydrogen ions are translocated across the cytoplasmic membrane), and thus conserves the redox energy in a proton gradient. This is NADH-quinone oxidoreductase subunit I from Xanthomonas axonopodis pv. citri (strain 306).